The primary structure comprises 427 residues: Flotillin-1 (427 aa).

Ser-19, Ser-163, and Ser-385 each carry phosphoserine. Thr-387 bears the Phosphothreonine mark.

The protein belongs to the band 7/mec-2 family. Flotillin subfamily. As to quaternary structure, heterooligomeric complex of flotillin-1 and flotillin-2 and caveolin-1 and caveolin-2. Interacts with ECPAS.

The protein resides in the cell membrane. Its subcellular location is the endosome. It is found in the membrane. The protein localises to the caveola. It localises to the melanosome. The protein resides in the membrane raft. May act as a scaffolding protein within caveolar membranes, functionally participating in formation of caveolae or caveolae-like vesicles. The chain is Flotillin-1 (FLOT1) from Macaca mulatta (Rhesus macaque).